The primary structure comprises 230 residues: Uracil-DNA glycosylase (230 aa).

D70 acts as the Proton acceptor in catalysis.

It belongs to the uracil-DNA glycosylase (UDG) superfamily. UNG family.

It localises to the cytoplasm. The catalysed reaction is Hydrolyzes single-stranded DNA or mismatched double-stranded DNA and polynucleotides, releasing free uracil.. In terms of biological role, excises uracil residues from the DNA which can arise as a result of misincorporation of dUMP residues by DNA polymerase or due to deamination of cytosine. This Campylobacter concisus (strain 13826) protein is Uracil-DNA glycosylase.